We begin with the raw amino-acid sequence, 102 residues long: UPF0235 protein Noc_3000 (102 aa).

This sequence belongs to the UPF0235 family.

This is UPF0235 protein Noc_3000 from Nitrosococcus oceani (strain ATCC 19707 / BCRC 17464 / JCM 30415 / NCIMB 11848 / C-107).